The primary structure comprises 87 residues: Acyl-CoA-binding protein (87 aa).

An ACB domain is found at 3–87 (LKEEFEEHAV…KVKQLLEESA (85 aa)). An acyl-CoA is bound by residues 30–34 (YGLYK), Lys-56, and Tyr-75.

The protein belongs to the ACBP family.

In terms of biological role, binds medium- and long-chain acyl-CoA esters with very high affinity and may function as an intracellular carrier of acyl-CoA esters. This Fritillaria agrestis (Stinkbells) protein is Acyl-CoA-binding protein (ACABP).